The primary structure comprises 590 residues: Methionine--tRNA ligase, mitochondrial (590 aa).

The transit peptide at 1–26 (MRTRFLFLTSGCKAVPELHKIVLANA) directs the protein to the mitochondrion. The short motif at 51–61 (FYVNASPHLGH) is the 'HIGH' region element. The short motif at 342 to 346 (KMSKS) is the 'KMSKS' region element. An ATP-binding site is contributed by Lys345. A disordered region spans residues 570 to 590 (LESQRADQQKNRKMEKGSNLK). A compositionally biased stretch (basic and acidic residues) spans 571-590 (ESQRADQQKNRKMEKGSNLK).

Belongs to the class-I aminoacyl-tRNA synthetase family.

The protein localises to the mitochondrion matrix. The catalysed reaction is tRNA(Met) + L-methionine + ATP = L-methionyl-tRNA(Met) + AMP + diphosphate. This is Methionine--tRNA ligase, mitochondrial (mars2) from Takifugu rubripes (Japanese pufferfish).